The sequence spans 620 residues: Delta(14)-sterol reductase LBR (620 aa).

Residues 1-62 (MPGRKFADGE…DIKPLKSFKQ (62 aa)) form the Tudor domain. At 1-215 (MPGRKFADGE…TPQRRDLEFG (215 aa)) the chain is on the nuclear side. Residues 52 to 111 (SDIKPLKSFKQRKSGSTSSSPSRRRSSRSRSRSRSRSPGRAPKGSRRSVSASYQADAKEK) form a disordered region. An N6-acetyllysine modification is found at Lys-55. A phosphoserine mark is found at Ser-59 and Ser-67. Phosphoserine; by CDK1 is present on residues Ser-71 and Ser-86. The segment covering 73 to 88 (SRRRSSRSRSRSRSRS) has biased composition (basic residues). A Phosphoserine modification is found at Ser-88. O-linked (GlcNAc) serine glycosylation occurs at Ser-96. Ser-99 and Ser-101 each carry phosphoserine. Thr-123 is modified (phosphothreonine). Phosphoserine is present on Ser-133. The residue at position 205 (Thr-205) is a Phosphothreonine. The next 8 membrane-spanning stretches (helical) occupy residues 216-236 (GVPG…LLLL), 263-283 (VCGV…LPVG), 304-324 (LYAF…DIEL), 331-351 (FLQF…YLYA), 452-472 (IIHD…VPFT), 486-506 (DLSW…YVIF), 525-547 (LAHL…WWGF), and 566-586 (PCGF…ALLI). Residues Lys-599 and Lys-606 each carry the N6-acetyllysine modification.

The protein belongs to the ERG4/ERG24 family. As to quaternary structure, interacts with CBX5. Interacts with DNA. Interaction with DNA is sequence independent with higher affinity for supercoiled and relaxed circular DNA than linear DNA. Interacts with lamin B. Interacts with CLNK. Interacts with TMEM147; promoting LBR localization to the nucleus inner membrane. Phosphorylated by CDK1 in mitosis when the inner nuclear membrane breaks down into vesicles that dissociate from the lamina and the chromatin. It is phosphorylated by different protein kinases in interphase when the membrane is associated with these structures. Phosphorylation of LBR and HP1 proteins may be responsible for some of the alterations in chromatin organization and nuclear structure which occur at various times during the cell cycle. Phosphorylated by SRPK1. In late anaphase LBR is dephosphorylated, probably by PP1 and/or PP2A, allowing reassociation with chromatin.

The protein localises to the nucleus inner membrane. Its subcellular location is the nucleus. It is found in the cytoplasm. It localises to the endoplasmic reticulum membrane. It catalyses the reaction 5alpha-cholest-8,14-dien-3beta-ol + NADPH + H(+) = 5alpha-cholest-8-en-3beta-ol + NADP(+). The enzyme catalyses 4,4-dimethyl-5alpha-cholesta-8,24-dien-3beta-ol + NADP(+) = 4,4-dimethyl-5alpha-cholesta-8,14,24-trien-3beta-ol + NADPH + H(+). The catalysed reaction is 4,4-dimethyl-8,14-cholestadien-3beta-ol + NADPH + H(+) = 4,4-dimethyl-5alpha-cholest-8-en-3beta-ol + NADP(+). It participates in steroid biosynthesis; cholesterol biosynthesis. Catalyzes the reduction of the C14-unsaturated bond of lanosterol, as part of the metabolic pathway leading to cholesterol biosynthesis. Plays a critical role in myeloid cell cholesterol biosynthesis which is essential to both myeloid cell growth and functional maturation. Mediates the activation of NADPH oxidases, perhaps by maintaining critical levels of cholesterol required for membrane lipid raft formation during neutrophil differentiation. Anchors the lamina and the heterochromatin to the inner nuclear membrane. This chain is Delta(14)-sterol reductase LBR (Lbr), found in Rattus norvegicus (Rat).